The following is a 244-amino-acid chain: Small ribosomal subunit protein uS2 (244 aa).

Belongs to the universal ribosomal protein uS2 family.

The protein is Small ribosomal subunit protein uS2 of Buchnera aphidicola subsp. Schizaphis graminum (strain Sg).